We begin with the raw amino-acid sequence, 154 residues long: Large ribosomal subunit protein uL30 (154 aa).

A disordered region spans residues 114–139 (PVLRLHPPRGGHRGQKHPTAEGGQIG). Positions 119 to 129 (HPPRGGHRGQK) are enriched in basic residues.

It belongs to the universal ribosomal protein uL30 family. In terms of assembly, part of the 50S ribosomal subunit.

This Haloquadratum walsbyi (strain DSM 16790 / HBSQ001) protein is Large ribosomal subunit protein uL30.